An 80-amino-acid chain; its full sequence is Large ribosomal subunit protein bL31B (80 aa).

The protein belongs to the bacterial ribosomal protein bL31 family. Type B subfamily. As to quaternary structure, part of the 50S ribosomal subunit.

The sequence is that of Large ribosomal subunit protein bL31B from Methylobacillus flagellatus (strain ATCC 51484 / DSM 6875 / VKM B-1610 / KT).